Reading from the N-terminus, the 209-residue chain is Protein-L-isoaspartate O-methyltransferase (209 aa).

Ser60 is a catalytic residue.

It belongs to the methyltransferase superfamily. L-isoaspartyl/D-aspartyl protein methyltransferase family.

It is found in the cytoplasm. It carries out the reaction [protein]-L-isoaspartate + S-adenosyl-L-methionine = [protein]-L-isoaspartate alpha-methyl ester + S-adenosyl-L-homocysteine. Its function is as follows. Catalyzes the methyl esterification of L-isoaspartyl residues in peptides and proteins that result from spontaneous decomposition of normal L-aspartyl and L-asparaginyl residues. It plays a role in the repair and/or degradation of damaged proteins. The sequence is that of Protein-L-isoaspartate O-methyltransferase from Methanococcus vannielii (strain ATCC 35089 / DSM 1224 / JCM 13029 / OCM 148 / SB).